Reading from the N-terminus, the 169-residue chain is Large ribosomal subunit protein uL10 (169 aa).

This sequence belongs to the universal ribosomal protein uL10 family. As to quaternary structure, part of the ribosomal stalk of the 50S ribosomal subunit. The N-terminus interacts with L11 and the large rRNA to form the base of the stalk. The C-terminus forms an elongated spine to which L12 dimers bind in a sequential fashion forming a multimeric L10(L12)X complex.

Functionally, forms part of the ribosomal stalk, playing a central role in the interaction of the ribosome with GTP-bound translation factors. This chain is Large ribosomal subunit protein uL10, found in Rickettsia peacockii (strain Rustic).